We begin with the raw amino-acid sequence, 111 residues long: UPF0145 protein BTH_I2656 (111 aa).

It belongs to the UPF0145 family.

In Burkholderia thailandensis (strain ATCC 700388 / DSM 13276 / CCUG 48851 / CIP 106301 / E264), this protein is UPF0145 protein BTH_I2656.